The sequence spans 89 residues: Large ribosomal subunit protein bL27 (89 aa).

Positions 1-23 are disordered; the sequence is MAHKKAGGSSRNGRDSESKRLGV.

Belongs to the bacterial ribosomal protein bL27 family.

The polypeptide is Large ribosomal subunit protein bL27 (Rhizobium meliloti (strain 1021) (Ensifer meliloti)).